Reading from the N-terminus, the 332-residue chain is Holliday junction branch migration complex subunit RuvB (332 aa).

A large ATPase domain (RuvB-L) region spans residues 1 to 181; that stretch reads MERIISELEM…FGVSHKMEYY (181 aa). ATP-binding residues include Leu20, Arg21, Gly62, Lys65, Thr66, Thr67, Arg171, Tyr181, and Arg218. Residue Thr66 coordinates Mg(2+). The small ATPAse domain (RuvB-S) stretch occupies residues 182 to 252; that stretch reads NENEIKSIII…SAKNALDMLG (71 aa). Residues 255–332 form a head domain (RuvB-H) region; the sequence is SNGLDDLDRN…QHFKKVEVKI (78 aa). Arg291, Arg310, and Arg315 together coordinate DNA.

This sequence belongs to the RuvB family. In terms of assembly, homohexamer. Forms an RuvA(8)-RuvB(12)-Holliday junction (HJ) complex. HJ DNA is sandwiched between 2 RuvA tetramers; dsDNA enters through RuvA and exits via RuvB. An RuvB hexamer assembles on each DNA strand where it exits the tetramer. Each RuvB hexamer is contacted by two RuvA subunits (via domain III) on 2 adjacent RuvB subunits; this complex drives branch migration. In the full resolvosome a probable DNA-RuvA(4)-RuvB(12)-RuvC(2) complex forms which resolves the HJ.

The protein localises to the cytoplasm. It carries out the reaction ATP + H2O = ADP + phosphate + H(+). The RuvA-RuvB-RuvC complex processes Holliday junction (HJ) DNA during genetic recombination and DNA repair, while the RuvA-RuvB complex plays an important role in the rescue of blocked DNA replication forks via replication fork reversal (RFR). RuvA specifically binds to HJ cruciform DNA, conferring on it an open structure. The RuvB hexamer acts as an ATP-dependent pump, pulling dsDNA into and through the RuvAB complex. RuvB forms 2 homohexamers on either side of HJ DNA bound by 1 or 2 RuvA tetramers; 4 subunits per hexamer contact DNA at a time. Coordinated motions by a converter formed by DNA-disengaged RuvB subunits stimulates ATP hydrolysis and nucleotide exchange. Immobilization of the converter enables RuvB to convert the ATP-contained energy into a lever motion, pulling 2 nucleotides of DNA out of the RuvA tetramer per ATP hydrolyzed, thus driving DNA branch migration. The RuvB motors rotate together with the DNA substrate, which together with the progressing nucleotide cycle form the mechanistic basis for DNA recombination by continuous HJ branch migration. Branch migration allows RuvC to scan DNA until it finds its consensus sequence, where it cleaves and resolves cruciform DNA. The chain is Holliday junction branch migration complex subunit RuvB from Fusobacterium nucleatum subsp. nucleatum (strain ATCC 25586 / DSM 15643 / BCRC 10681 / CIP 101130 / JCM 8532 / KCTC 2640 / LMG 13131 / VPI 4355).